Reading from the N-terminus, the 197-residue chain is tRNA(Phe) 7-((3-amino-3-carboxypropyl)-4-demethylwyosine(37)-N(4))-methyltransferase (197 aa).

This sequence belongs to the TYW3 family.

The enzyme catalyses 4-demethyl-7-[(3S)-3-amino-3-carboxypropyl]wyosine(37) in tRNA(Phe) + S-adenosyl-L-methionine = 7-[(3S)-3-amino-3-carboxypropyl]wyosine(37) in tRNA(Phe) + S-adenosyl-L-homocysteine + H(+). In terms of biological role, S-adenosyl-L-methionine-dependent methyltransferase that acts as a component of the wyosine derivatives biosynthesis pathway. Probably methylates N-4 position of wybutosine-86 to produce wybutosine-72. This Thermococcus sibiricus (strain DSM 12597 / MM 739) protein is tRNA(Phe) 7-((3-amino-3-carboxypropyl)-4-demethylwyosine(37)-N(4))-methyltransferase.